A 175-amino-acid polypeptide reads, in one-letter code: RNA pyrophosphohydrolase (175 aa).

A Nudix hydrolase domain is found at 6 to 149 (GYRPNVGIVI…KRDVYRRVMK (144 aa)). Positions 38-59 (GGINPGETAEQAMYRELFEEVG) match the Nudix box motif.

Belongs to the Nudix hydrolase family. RppH subfamily. A divalent metal cation is required as a cofactor.

In terms of biological role, accelerates the degradation of transcripts by removing pyrophosphate from the 5'-end of triphosphorylated RNA, leading to a more labile monophosphorylated state that can stimulate subsequent ribonuclease cleavage. The chain is RNA pyrophosphohydrolase from Erwinia tasmaniensis (strain DSM 17950 / CFBP 7177 / CIP 109463 / NCPPB 4357 / Et1/99).